The following is a 121-amino-acid chain: Small ribosomal subunit protein uS13 (121 aa).

The interval 89-121 (MRHRRGLPVRGQHTKNNARTRKGKAVSIAGKKK) is disordered.

Belongs to the universal ribosomal protein uS13 family. Part of the 30S ribosomal subunit. Forms a loose heterodimer with protein S19. Forms two bridges to the 50S subunit in the 70S ribosome.

Located at the top of the head of the 30S subunit, it contacts several helices of the 16S rRNA. In the 70S ribosome it contacts the 23S rRNA (bridge B1a) and protein L5 of the 50S subunit (bridge B1b), connecting the 2 subunits; these bridges are implicated in subunit movement. Contacts the tRNAs in the A and P-sites. The chain is Small ribosomal subunit protein uS13 from Levilactobacillus brevis (strain ATCC 367 / BCRC 12310 / CIP 105137 / JCM 1170 / LMG 11437 / NCIMB 947 / NCTC 947) (Lactobacillus brevis).